Reading from the N-terminus, the 468-residue chain is Argininosuccinate lyase (468 aa).

This sequence belongs to the lyase 1 family. Argininosuccinate lyase subfamily.

Its subcellular location is the cytoplasm. It catalyses the reaction 2-(N(omega)-L-arginino)succinate = fumarate + L-arginine. The protein operates within amino-acid biosynthesis; L-arginine biosynthesis; L-arginine from L-ornithine and carbamoyl phosphate: step 3/3. The sequence is that of Argininosuccinate lyase from Alkalilimnicola ehrlichii (strain ATCC BAA-1101 / DSM 17681 / MLHE-1).